A 115-amino-acid polypeptide reads, in one-letter code: Insulin-like peptide IlO1_i1 (115 aa).

Residues 1-20 (MFVYTTIMLLLLAEINHSQG) form the signal peptide. 3 disulfide bridges follow: C40–C101, C52–C114, and C100–C105. Residues 59-93 (RRNRITGLDQRSIFESNLLAKRFLISRRQIVNNRR) constitute a propeptide, c peptide.

This sequence belongs to the insulin family. Expressed in tentacles.

Its subcellular location is the secreted. Functionally, heterodimer with unknown function. Surprisingly, the truncated synthetic analog (dimer of 27-58 and 94-115) does not bind to long insulin receptor (HIR-B) and insulin-like growth factor 1 receptor. This truncated synthetic analog shows very weak inhibitory activity on different voltage-gated channels. This chain is Insulin-like peptide IlO1_i1, found in Oulactis sp. (Sea anemone).